The following is a 604-amino-acid chain: uncharacterized protein (604 aa).

A signal peptide spans 1–40 (MWLQQRIKVFPGLLSSSWARRVLAVSGFLVIIYWYIFSGS). At 41-563 (HYRSFWYSGK…EEHMAKQYRG (523 aa)) the chain is on the extracellular side. N337 is a glycosylation site (N-linked (GlcNAc...) asparagine). The chain crosses the membrane as a helical span at residues 564–584 (LPFLFWFSVASLITLFHLFLF). Residues 585 to 604 (KLIYNEYCGPGAKPLFRSKV) are Cytoplasmic-facing.

It is found in the membrane. This is an uncharacterized protein from Xenopus laevis (African clawed frog).